Reading from the N-terminus, the 1547-residue chain is Mediator of RNA polymerase II transcription subunit 12 (1547 aa).

Disordered regions lie at residues 1-63 (MTSR…RPHI) and 1356-1509 (PVIP…QQRD). A compositionally biased stretch (pro residues) spans 1357–1369 (VIPPLEPPQPPNP). Residues 1379–1390 (YQSPQMTSNTAA) are compositionally biased toward polar residues. 2 stretches are compositionally biased toward low complexity: residues 1398–1413 (QQQQQSQTLQPSQQTQ) and 1446–1468 (LSPLQQMQHMQQLQGLAQQRASQ). Polar residues-rich tracts occupy residues 1469–1480 (PSPIHSQRPTSV) and 1499–1509 (AHTSYVNQQRD).

This sequence belongs to the Mediator complex subunit 12 family. In terms of assembly, component of the SRB8-11 complex, which itself associates with the Mediator complex.

The protein localises to the nucleus. Component of the SRB8-11 complex. The SRB8-11 complex is a regulatory module of the Mediator complex which is itself involved in regulation of basal and activated RNA polymerase II-dependent transcription. The SRB8-11 complex may be involved in the transcriptional repression of a subset of genes regulated by Mediator. It may inhibit the association of the Mediator complex with RNA polymerase II to form the holoenzyme complex. In Phaeosphaeria nodorum (strain SN15 / ATCC MYA-4574 / FGSC 10173) (Glume blotch fungus), this protein is Mediator of RNA polymerase II transcription subunit 12 (SRB8).